Here is a 286-residue protein sequence, read N- to C-terminus: Aquaporin PIP1-1 (286 aa).

M1 carries the N-acetylmethionine modification. A disordered region spans residues 1–34; the sequence is MEGKEEDVRVGANKFPERQPIGTSAQSDKDYKEP. At 1–54 the chain is on the cytoplasmic side; that stretch reads MEGKEEDVRVGANKFPERQPIGTSAQSDKDYKEPPPAPFFEPGELSSWSFWRAG. The helical transmembrane segment at 55-75 threads the bilayer; the sequence is IAEFIATFLFLYITVLTVMGV. Residues 76-91 lie on the Extracellular side of the membrane; the sequence is KRSPNMCASVGIQGIA. A helical membrane pass occupies residues 92–112; that stretch reads WAFGGMIFALVYCTAGISGGH. The Cytoplasmic segment spans residues 113 to 132; that stretch reads INPAVTFGLFLARKLSLTRA. The short motif at 114–116 is the NPA 1 element; the sequence is NPA. Residues 133 to 153 traverse the membrane as a helical segment; that stretch reads LYYIVMQCLGAICGAGVVKGF. The Extracellular segment spans residues 154–174; that stretch reads QPKQYQALGGGANTVAHGYTK. The helical transmembrane segment at 175 to 195 threads the bilayer; sequence GSGLGAEIIGTFVLVYTVFSA. The Cytoplasmic portion of the chain corresponds to 196 to 208; it reads TDAKRNARDSHVP. A helical membrane pass occupies residues 209–229; sequence ILAPLPIGFAVFLVHLATIPI. The Extracellular segment spans residues 230-256; the sequence is TGTGINPARSLGAAIIYNKDHSWDDHW. The NPA 2 motif lies at 235–237; sequence NPA. The chain crosses the membrane as a helical span at residues 257–277; it reads VFWVGPFIGAALAALYHVVVI. At 278–286 the chain is on the cytoplasmic side; it reads RAIPFKSRS. Position 284 is a phosphoserine (S284).

Belongs to the MIP/aquaporin (TC 1.A.8) family. PIP (TC 1.A.8.11) subfamily. In terms of tissue distribution, widely expressed. Expressed in roots, above ground and in flower buds.

The protein localises to the cell membrane. In terms of biological role, water channel required to facilitate the transport of water across cell membrane. Its function is impaired by Hg(2+). This chain is Aquaporin PIP1-1 (PIP1-1), found in Arabidopsis thaliana (Mouse-ear cress).